Here is a 409-residue protein sequence, read N- to C-terminus: Tyrosine--tRNA ligase (409 aa).

Y39 is a binding site for L-tyrosine. Positions 44 to 53 (PTAASLHVGS) match the 'HIGH' region motif. L-tyrosine is bound by residues Y176 and Q180. Residues 236-240 (KMGKT) carry the 'KMSKS' region motif. K239 is an ATP binding site. An S4 RNA-binding domain is found at 346–408 (ISLVDALVGL…GKKAHGVIQA (63 aa)).

This sequence belongs to the class-I aminoacyl-tRNA synthetase family. TyrS type 1 subfamily. Homodimer.

It is found in the cytoplasm. The enzyme catalyses tRNA(Tyr) + L-tyrosine + ATP = L-tyrosyl-tRNA(Tyr) + AMP + diphosphate + H(+). Catalyzes the attachment of tyrosine to tRNA(Tyr) in a two-step reaction: tyrosine is first activated by ATP to form Tyr-AMP and then transferred to the acceptor end of tRNA(Tyr). The chain is Tyrosine--tRNA ligase from Zymomonas mobilis subsp. mobilis (strain ATCC 31821 / ZM4 / CP4).